Consider the following 163-residue polypeptide: Photosystem II extrinsic protein V (163 aa).

A signal peptide spans 1–26; the sequence is MLKKCVWLAVALCLCLWQFTMGTALA. 2 residues coordinate heme c: H67 and H118.

Belongs to the cytochrome c family. PsbV subfamily. In terms of assembly, PSII is composed of 1 copy each of membrane proteins PsbA, PsbB, PsbC, PsbD, PsbE, PsbF, PsbH, PsbI, PsbJ, PsbK, PsbL, PsbM, PsbT, PsbX, PsbY, PsbZ, Psb30/Ycf12, peripheral proteins PsbO, CyanoQ (PsbQ), PsbU, PsbV and a large number of cofactors. It forms dimeric complexes. Heme c serves as cofactor.

The protein localises to the cellular thylakoid membrane. Its function is as follows. One of the extrinsic, lumenal subunits of photosystem II (PSII). PSII is a light-driven water plastoquinone oxidoreductase, using light energy to abstract electrons from H(2)O, generating a proton gradient subsequently used for ATP formation. The extrinsic proteins stabilize the structure of photosystem II oxygen-evolving complex (OEC), the ion environment of oxygen evolution and protect the OEC against heat-induced inactivation. Low-potential cytochrome c that plays a role in the OEC of PSII. The chain is Photosystem II extrinsic protein V from Thermosynechococcus vestitus (strain NIES-2133 / IAM M-273 / BP-1).